An 838-amino-acid chain; its full sequence is Protein P (838 aa).

Residues 1 to 179 (MPLSYQHFRK…FCGSPYSWEQ (179 aa)) form a terminal protein domain (TP) region. The segment at 180–341 (ELQHSQRHGD…YCLSHLVNLR (162 aa)) is spacer. Residues 219–245 (GLQPHQGPLASSQPGRSGSIRARAHPS) are disordered. The tract at residues 342-685 (EDWGPCDDHG…YMNLYPVARQ (344 aa)) is polymerase/reverse transcriptase domain (RT). In terms of domain architecture, Reverse transcriptase spans 352-595 (EHHIRIPRTP…YSLNFMGYII (244 aa)). Mg(2+)-binding residues include Asp-424, Asp-546, and Asp-547.

It belongs to the hepadnaviridae P protein family.

It carries out the reaction DNA(n) + a 2'-deoxyribonucleoside 5'-triphosphate = DNA(n+1) + diphosphate. The catalysed reaction is Endonucleolytic cleavage to 5'-phosphomonoester.. Activated by host HSP70 and HSP40 in vitro to be able to bind the epsilon loop of the pgRNA. Because deletion of the RNase H region renders the protein partly chaperone-independent, the chaperones may be needed indirectly to relieve occlusion of the RNA-binding site by this domain. Inhibited by several reverse-transcriptase inhibitors: Lamivudine, Adefovir and Entecavir. Its function is as follows. Multifunctional enzyme that converts the viral RNA genome into dsDNA in viral cytoplasmic capsids. This enzyme displays a DNA polymerase activity that can copy either DNA or RNA templates, and a ribonuclease H (RNase H) activity that cleaves the RNA strand of RNA-DNA heteroduplexes in a partially processive 3'- to 5'-endonucleasic mode. Neo-synthesized pregenomic RNA (pgRNA) are encapsidated together with the P protein, and reverse-transcribed inside the nucleocapsid. Initiation of reverse-transcription occurs first by binding the epsilon loop on the pgRNA genome, and is initiated by protein priming, thereby the 5'-end of (-)DNA is covalently linked to P protein. Partial (+)DNA is synthesized from the (-)DNA template and generates the relaxed circular DNA (RC-DNA) genome. After budding and infection, the RC-DNA migrates in the nucleus, and is converted into a plasmid-like covalently closed circular DNA (cccDNA). The activity of P protein does not seem to be necessary for cccDNA generation, and is presumably released from (+)DNA by host nuclear DNA repair machinery. The sequence is that of Protein P from Hepatitis B virus genotype A2 subtype adw (isolate Japan/Nishioka/1983) (HBV-A).